The chain runs to 381 residues: Prostatic acid phosphatase (381 aa).

The first 31 residues, 1-31 (MRAVPLPLSRTASLSLGFLLLLSLCLDPGQA), serve as a signal peptide directing secretion. Arg-42 serves as a coordination point for substrate. The active-site Nucleophile is the His-43. Arg-46 provides a ligand contact to substrate. Asn-93 is a glycosylation site (N-linked (GlcNAc...) asparagine). A substrate-binding site is contributed by Arg-110. Cystine bridges form between Cys-160–Cys-371, Cys-214–Cys-312, and Cys-346–Cys-350. Residue Asn-219 is glycosylated (N-linked (GlcNAc...) asparagine). Position 288 (His-288) interacts with substrate. The active-site Proton donor is the Asp-289. Residue Asn-332 is glycosylated (N-linked (GlcNAc...) asparagine).

It belongs to the histidine acid phosphatase family. In terms of assembly, homodimer; dimer formation is required for phosphatase activity. Expressed in salivary gland, thymus and thyroid gland. As to expression, widely expressed in prostate lobes, brain, kidney, liver, lung, muscle, placenta, salivary gland, spleen, thyroid and thymus. Locates to Schwann cells and fibroblasts. Expressed in peptidergic and non-peptidergic nociceptive (pain-sensing) neurons. Preferentially expressed in non-peptidergic doral root ganglia neurons.

It is found in the secreted. It localises to the cell membrane. The protein localises to the lysosome membrane. The catalysed reaction is a phosphate monoester + H2O = an alcohol + phosphate. The enzyme catalyses a ribonucleoside 5'-phosphate + H2O = a ribonucleoside + phosphate. It carries out the reaction 1-(9Z-octadecenoyl)-sn-glycero-3-phosphate + H2O = 1-(9Z-octadecenoyl)-sn-glycerol + phosphate. It catalyses the reaction O-phospho-L-tyrosyl-[protein] + H2O = L-tyrosyl-[protein] + phosphate. Its function is as follows. A non-specific tyrosine phosphatase that dephosphorylates a diverse number of substrates under acidic conditions (pH 4-6) including alkyl, aryl, and acyl orthophosphate monoesters and phosphorylated proteins. Has lipid phosphatase activity and inactivates lysophosphatidic acid in seminal plasma. In terms of biological role, in addition to its tyrosine phosphatase activity, also has ecto-5'-nucleotidase activity in dorsal root ganglion (DRG) neurons. Generates adenosine from AMP. This extracellular adenosine leads to a decrease in chronic pain by activating A1R in nociceptive neurons. The polypeptide is Prostatic acid phosphatase (Acp3) (Mus musculus (Mouse)).